The following is a 209-amino-acid chain: GTP-binding nuclear protein Ran1B (209 aa).

Residues Asn1 to Asp162 enclose the Small GTPase Ran-type domain. Asp9 to Thr16 serves as a coordination point for GTP. A switch-I region spans residues Lys28–Val36. GTP is bound by residues Gly59, Asn113–Asp116, and Ser141–Lys143. The segment at Gly59–Gln75 is switch-II. The segment covering Gln187–Leu200 has biased composition (low complexity). Residues Gln187 to Asp209 form a disordered region.

The protein belongs to the small GTPase superfamily. Ran family. As to quaternary structure, found in a nuclear export complex with RanGTP, exportin and pre-miRNA.

It is found in the nucleus. GTP-binding protein involved in nucleocytoplasmic transport. Required for the import of protein into the nucleus and also for RNA export. Involved in chromatin condensation and control of cell cycle. This Lotus japonicus (Lotus corniculatus var. japonicus) protein is GTP-binding nuclear protein Ran1B (RAN1B).